The following is a 372-amino-acid chain: MSSTELRRTALDATHRALGATMTDFAGWDMPLRYGSEREEHVAVRTRAGLFDLSHMGEITVTGPQAAELLNFALVGNIGTVKPGRARYTMICREDGGILDDLIVYRLEEAEYMVVANASNAQVVLDALTERAAGFDAEVRDDRDAYALLAVQGPESPGILASLTDADLDGLKYYAGLPGTVAGVPALIARTGYTGEDGFELFVKPEHAVGLWQALTGAGEAAGLIPCGLSCRDTLRLEAGMPLYGNELSTALTPFDAGLGRVVKFEKEGDFVGRAALTEAAERAASRPPRVLVGLVAEGRRVPRSGYRVVAGGEVIGEVTSGAPSPTLGRPIAMAYVDPAHAAPGTEGVGVDIRGSHEPYEVVALPFYKRQK.

Belongs to the GcvT family. In terms of assembly, the glycine cleavage system is composed of four proteins: P, T, L and H.

The enzyme catalyses N(6)-[(R)-S(8)-aminomethyldihydrolipoyl]-L-lysyl-[protein] + (6S)-5,6,7,8-tetrahydrofolate = N(6)-[(R)-dihydrolipoyl]-L-lysyl-[protein] + (6R)-5,10-methylene-5,6,7,8-tetrahydrofolate + NH4(+). Its function is as follows. The glycine cleavage system catalyzes the degradation of glycine. This is Aminomethyltransferase from Streptomyces coelicolor (strain ATCC BAA-471 / A3(2) / M145).